Reading from the N-terminus, the 593-residue chain is NADH-quinone oxidoreductase subunit C/D 1 (593 aa).

The tract at residues 1-193 (MPWAKEGDLQ…DNLEGLMNYD (193 aa)) is NADH dehydrogenase I subunit C. Residues 217 to 593 (AQIVLNWGPL…IDPVVGETDR (377 aa)) form an NADH dehydrogenase I subunit D region.

In the N-terminal section; belongs to the complex I 30 kDa subunit family. This sequence in the C-terminal section; belongs to the complex I 49 kDa subunit family. NDH-1 is composed of 13 different subunits. Subunits NuoB, CD, E, F, and G constitute the peripheral sector of the complex.

Its subcellular location is the cell inner membrane. The enzyme catalyses a quinone + NADH + 5 H(+)(in) = a quinol + NAD(+) + 4 H(+)(out). Functionally, NDH-1 shuttles electrons from NADH, via FMN and iron-sulfur (Fe-S) centers, to quinones in the respiratory chain. The immediate electron acceptor for the enzyme in this species is believed to be ubiquinone. Couples the redox reaction to proton translocation (for every two electrons transferred, four hydrogen ions are translocated across the cytoplasmic membrane), and thus conserves the redox energy in a proton gradient. This chain is NADH-quinone oxidoreductase subunit C/D 1 (nuoC1), found in Aquifex aeolicus (strain VF5).